The following is a 132-amino-acid chain: Small ribosomal subunit protein uS8 (132 aa).

It belongs to the universal ribosomal protein uS8 family. In terms of assembly, part of the 30S ribosomal subunit. Contacts proteins S5 and S12.

Its function is as follows. One of the primary rRNA binding proteins, it binds directly to 16S rRNA central domain where it helps coordinate assembly of the platform of the 30S subunit. In Geobacter sp. (strain M21), this protein is Small ribosomal subunit protein uS8.